The sequence spans 3014 residues: Genome polyprotein (3014 aa).

Residue S2 is modified to N-acetylserine; by host. An interaction with STAT1 region spans residues 2 to 23 (STNPKPQRKTKRNTNRRPQDVK). The interaction with EIF2AK2/PKR stretch occupies residues 2-58 (STNPKPQRKTKRNTNRRPQDVKFPGGGQIVGGVYLLPRRGPKLGVRATRKNSERSQP). The segment at 2–59 (STNPKPQRKTKRNTNRRPQDVKFPGGGQIVGGVYLLPRRGPKLGVRATRKNSERSQPR) is interaction with DDX3X. A disordered region spans residues 2–75 (STNPKPQRKT…PKARRPTGRS (74 aa)). Over 2-168 (STNPKPQRKT…EDGINYATGN (167 aa)) the chain is Cytoplasmic. 2 short sequence motifs (nuclear localization signal) span residues 5-13 (PKPQRKTKR) and 38-43 (PRRGPK). Basic residues predominate over residues 7 to 16 (PQRKTKRNTN). S53 carries the post-translational modification Phosphoserine; by host. 2 short sequence motifs (nuclear localization signal) span residues 58 to 64 (PRGRRQP) and 66 to 71 (PKARRP). Over residues 58–72 (PRGRRQPIPKARRPT) the composition is skewed to basic residues. 2 positions are modified to phosphoserine; by host: S99 and S116. The segment at 112–152 (PRRKSPNLGRVIHTLTCGFPHLMGYIPLVGGPVGGVSRALA) is important for endoplasmic reticulum and mitochondrial localization. Positions 122-173 (VIHTLTCGFPHLMGYIPLVGGPVGGVSRALAHGVKVLEDGINYATGNLPGCP) are interaction with APOA2. The interval 164-167 (YATG) is important for lipid droplets localization. Residues 169–189 (LPGCPFSIFVLALLWCLTVPA) traverse the membrane as a helical segment. Positions 178–191 (VLALLWCLTVPASA) are cleaved as a propeptide — ER anchor for the core protein, removed in mature form by host signal peptidase. Residues 190–358 (SAVPYRNASG…AGGHWGVLLA (169 aa)) lie on the Lumenal side of the membrane. N-linked (GlcNAc...) asparagine; by host glycosylation is found at N196, N209, and N234. Positions 265–296 (LAGGAAFCSALYVGDACGALSLVGQMFTYKPR) are important for fusion. N305 is a glycosylation site (N-linked (GlcNAc...) asparagine; by host). A helical membrane pass occupies residues 359-379 (AAYFASTANWAKVILVLFLFA). Over 380–726 (GVDGRTHTVG…WEYIMLVFLL (347 aa)) the chain is Lumenal. Residues 385 to 412 (THTVGGTVGQGLKSLTSFFNPGPQRQLQ) form an HVR1 region. N-linked (GlcNAc...) (high mannose) asparagine; by host glycans are attached at residues N417, N423, and N430. 4 disulfides stabilise this stretch: C429–C553, C452–C459, C487–C495, and C504–C509. The N-linked (GlcNAc...) asparagine; by host glycan is linked to N448. Residues 475–479 (ATISG) are HVR2. The tract at residues 481 to 494 (SDDKPYCWHYPPRP) is CD81-binding 1. A glycan (N-linked (GlcNAc...) asparagine; by host) is linked at N533. Residues 545–552 (PPAGNWFG) are CD81-binding 2. N-linked (GlcNAc...) asparagine; by host glycosylation is present at N557. The cysteines at positions 565 and 570 are disulfide-linked. Residue N578 is glycosylated (N-linked (GlcNAc...) asparagine; by host). 3 disulfides stabilise this stretch: C582/C586, C598/C621, and C608/C645. N624 and N646 each carry an N-linked (GlcNAc...) (high mannose) asparagine; by host glycan. Residues C653 and C678 are joined by a disulfide bond. The tract at residues 661-672 (AELSPLLHTTTQ) is PKR/eIF2-alpha phosphorylation homology domain (PePHD). The chain crosses the membrane as a helical span at residues 727–747 (LADARICTCLLILLLICQAEA). At 748–758 (TCKNVIVLNAA) the chain is on the lumenal side. A helical membrane pass occupies residues 759–779 (AAAGNHGFFWGLLVVCLAWHV). Residues 780–783 (KGRL) lie on the Cytoplasmic side of the membrane. Residues 784 to 804 (VPGATYLCLGVWPLLLVRLLR) form a helical membrane-spanning segment. Over 805–814 (PHRALALDSS) the chain is Lumenal. A helical transmembrane segment spans residues 815-835 (DGGTVGCLVLIVLTIFTLTPG). The Cytoplasmic portion of the chain corresponds to 836-882 (YKKKVVLVMWWLQYFIARVEAIIHVWVPPLQVKGGRDAVIMLTCLFH). A helical transmembrane segment spans residues 883–903 (PALGFEITKILFGILGPLYLL). Residues 904-929 (QHSLTKVPYFLRARALLRLCLLAKHL) lie on the Lumenal side of the membrane. The Peptidase C18 domain occupies 904-1027 (QHSLTKVPYF…DIKTSGWRLL (124 aa)). The tract at residues 905–1207 (HSLTKVPYFL…PVENLETTMR (303 aa)) is protease NS2-3. C923 carries the S-palmitoyl cysteine; by host lipid modification. The chain crosses the membrane as a helical span at residues 930–950 (VYGKYVQAALLHLGRLTGTYI). The interaction with host SCPS1 stretch occupies residues 930-950 (VYGKYVQAALLHLGRLTGTYI). Over 951–1658 (YDHLAPMKDW…CMSADLEVIT (708 aa)) the chain is Cytoplasmic. Catalysis depends on for protease NS2 activity; shared with dimeric partner residues H953, E973, and C994. One can recognise a Peptidase S29 domain in the interval 1028 to 1209 (APITAYAQQT…ENLETTMRSP (182 aa)). Catalysis depends on charge relay system; for serine protease NS3 activity residues H1084 and D1108. C1124 and C1126 together coordinate Zn(2+). S1166 (charge relay system; for serine protease NS3 activity) is an active-site residue. 2 residues coordinate Zn(2+): C1172 and H1176. One can recognise a Helicase ATP-binding domain in the interval 1218–1351 (PAVPHEFQVG…ARLVVLATAI (134 aa)). 1231–1238 (APTGSGKS) contacts ATP. S1238 and E1318 together coordinate Mg(2+). A DECH box motif is present at residues 1317–1320 (DECH). Residues 1362-1539 (NIEEVALPSE…DLTPAETTVR (178 aa)) enclose the Helicase C-terminal domain. The interval 1487–1499 (QRRGRTGRGRHGI) is RNA-binding. Residues 1659-1679 (STWVLVGGVVAALAAYCLTVG) form a helical membrane-spanning segment. Positions 1680–1691 (SVAIVGRIILSG) are NS3-binding. Topologically, residues 1680 to 1806 (SVAIVGRIIL…AVTSPLTTHQ (127 aa)) are cytoplasmic. A helical membrane pass occupies residues 1807–1827 (TLLFNILGGWVASQIAPPTAA). Over 1828-1829 (TA) the chain is Lumenal. Residues 1830-1850 (FVVSGMAGAAVGNIGLGRVLI) traverse the membrane as a helical segment. D1851 is a topological domain (cytoplasmic). Residues 1852–1872 (ILAGYGTGVAGALVAFKIMCG) traverse the membrane as a helical segment. The Lumenal segment spans residues 1873-1882 (ERPTAEELVN). A helical membrane pass occupies residues 1883–1903 (LLPSILCPGALVVGVICAAVL). Residues 1904-1973 (RRHIGPGEGA…WIGEDYSTPC (70 aa)) lie on the Cytoplasmic side of the membrane. C1973 is lipidated: S-palmitoyl cysteine; by host. Residues 1974–2003 (DGTWLRAIWDWVCTALTDFKAWLQAKLLPQ) lie within the membrane without spanning it. The Cytoplasmic portion of the chain corresponds to 2004–2993 (LPGVPFFSCQ…YHSMSRARPR (990 aa)). C2012, C2030, C2032, and C2053 together coordinate Zn(2+). Residues 2121 to 2209 (EFFTELDGVR…ANSSASQLSA (89 aa)) form an FKBP8-binding region. Positions 2121–2334 (EFFTELDGVR…VPLPRRKRKP (214 aa)) are transcriptional activation. Positions 2136-2140 (PPCNP) are interaction with non-structural protein 4A. Residues 2190–2441 (RLNRGSPPSL…ALITPCSAEE (252 aa)) are interaction with host SKP2. Residues S2195, S2198, S2202, S2205, S2208, and S2211 each carry the phosphoserine; by host modification. Residues 2211–2250 (SLKATCTIQGHHPDADLIKANLLWRQCMGGNITRVEAENK) form an ISDR region. An interaction with EIF2AK2/PKR region spans residues 2211-2276 (SLKATCTIQG…REISVSADCF (66 aa)). Positions 2250–2307 (KVEILDCFKPLKEEEDDREISVSADCFKKGPAFPPALPVWARPGYDPPLLETWKRPDY) are NS4B-binding. The tract at residues 2300–2378 (ETWKRPDYDP…GTSSQHDSGP (79 aa)) is V3. 2 disordered regions span residues 2315 to 2342 (CPIPPAGPPPVPLPRRKRKPMELSDSTV) and 2359 to 2412 (PSIE…GSWS). The segment covering 2316–2327 (PIPPAGPPPVPL) has biased composition (pro residues). The SH3-binding signature appears at 2323–2326 (PPVP). A Nuclear localization signal motif is present at residues 2328-2337 (PRRKRKPMEL). Over residues 2361-2375 (IEGQDSALGTSSQHD) the composition is skewed to polar residues. Over residues 2376–2385 (SGPEEKRDDN) the composition is skewed to basic and acidic residues. The residue at position 2465 (S2465) is a Phosphoserine; by host. The 119-residue stretch at 2637–2755 (PMAFSYDTRC…ICESQGTHED (119 aa)) folds into the RdRp catalytic domain. Mg(2+)-binding residues include D2643, D2741, and D2742. The helical transmembrane segment at 2994–3014 (NLLLCLLLLSVGVGIFLLPAR) threads the bilayer.

It belongs to the hepacivirus polyprotein family. In terms of assembly, homooligomer. Interacts with E1 (via C-terminus). Interacts with the non-structural protein 5A. Interacts (via N-terminus) with host STAT1 (via SH2 domain); this interaction results in decreased STAT1 phosphorylation and ubiquitin-mediated proteasome-dependent STAT1 degradation, leading to decreased IFN-stimulated gene transcription. Interacts with host STAT3; this interaction constitutively activates STAT3. Interacts with host LTBR receptor. Interacts with host TNFRSF1A receptor and possibly induces apoptosis. Interacts with host HNRPK. Interacts with host YWHAE. Interacts with host UBE3A/E6AP. Interacts with host DDX3X. Interacts with host APOA2. Interacts with host RXRA protein. Interacts with host SP110 isoform 3/Sp110b; this interaction sequesters the transcriptional corepressor SP110 away from the nucleus. Interacts with host CREB3 nuclear transcription protein; this interaction triggers cell transformation. Interacts with host ACY3. Interacts with host C1QR1. Interacts with host RBM24; this interaction, which enhances the interaction of the mature core protein with 5'-UTR, may inhibit viral translation and favor replication. Interacts with host EIF2AK2/PKR; this interaction induces the autophosphorylation of EIF2AK2. Part of the viral assembly initiation complex composed of NS2, E1, E2, NS3, NS4A, NS5A and the mature core protein. As to quaternary structure, forms a heterodimer with envelope glycoprotein E2. Interacts with mature core protein. Interacts with protease NS2. The heterodimer E1/E2 interacts with host CLDN1; this interaction plays a role in viral entry into host cell. Interacts with host SPSB2 (via C-terminus). Part of the viral assembly initiation complex composed of NS2, E1, E2, NS3, NS4A, NS5A and the mature core protein. Interacts with host NEURL3; this interaction prevents E1 binding to glycoprotein E2. Forms a heterodimer with envelope glycoprotein E1. Interacts with host CD81 and SCARB1 receptors; these interactions play a role in viral entry into host cell. Interacts with host EIF2AK2/PKR; this interaction inhibits EIF2AK2 and probably allows the virus to evade the innate immune response. Interacts with host CD209/DC-SIGN and CLEC4M/DC-SIGNR. Interact with host SPCS1; this interaction is essential for viral particle assembly. Interacts with protease NS2. The heterodimer E1/E2 interacts with host CLDN1; this interaction plays a role in viral entry into host cell. Part of the viral assembly initiation complex composed of NS2, E1, E2, NS3, NS4A, NS5A and the mature core protein. Interacts with host SLC3A2/4F2hc; the interaction may facilitate viral entry into host cell. Interacts with human PLSCR1. In terms of assembly, homohexamer. Homoheptamer. Interacts with protease NS2. As to quaternary structure, homodimer. Interacts with host SPCS1; this interaction is essential for viral particle assembly. Interacts with envelope glycoprotein E1. Interacts with envelope glycoprotein E2. Interacts with viroporin p7. Interacts with serine protease/helicase NS3. Part of the replication complex composed of NS2, NS3, NS4A, NS4B, NS5A and the RNA-directed RNA polymerase embedded in an ER-derived membranous web. Part of the viral assembly initiation complex composed of NS2, E1, E2, NS3, NS4A, NS5A and the mature core protein. Interacts with protease NS2. Interacts with non-structural protein 4A; this interaction stabilizes the folding of NS3 serine protease. NS3-NS4A interaction is essential for NS3 activation and allows membrane anchorage of the latter. NS3/NS4A complex also prevents phosphorylation of host IRF3, thus preventing the establishment of dsRNA induced antiviral state. Interacts with host MAVS; this interaction leads to the cleavage and inhibition of host MAVS. Interacts with host TICAM1; this interaction leads to the cleavage and inhibition of host TICAM1. Interacts with host TANK-binding kinase/TBK1; this interaction results in the inhibition of the association between TBK1 and IRF3, which leads to the inhibition of IRF3 activation. Interacts with host RBM24. Part of the replication complex composed of NS2, NS3, NS4A, NS4B, NS5A and the RNA-directed RNA polymerase embedded in an ER-derived membranous web. Part of the viral assembly initiation complex composed of NS2, E1, E2, NS3, NS4A, NS5A and the mature core protein. In terms of assembly, interacts with NS3 serine protease; this interaction stabilizes the folding of NS3 serine protease. NS3-NS4A interaction is essential for NS3 activation and allows membrane anchorage of the latter. Interacts with non-structural protein 5A (via N-terminus). Part of the replication complex composed of NS2, NS3, NS4A, NS4B, NS5A and the RNA-directed RNA polymerase embedded in an ER-derived membranous web. Part of the viral assembly initiation complex composed of NS2, E1, E2, NS3, NS4A, NS5A and the mature core protein. As to quaternary structure, homomultimer. Interacts with non-structural protein NS5A. Interacts with host PLA2G4C; this interaction likely initiates the recruitment of replication complexes to lipid droplets. Interacts with host STING; this interaction disrupts the interaction between STING and TBK1 thereby suppressing the interferon signaling. Part of the replication complex composed of NS2, NS3, NS4A, NS4B, NS5A and the RNA-directed RNA polymerase embedded in an ER-derived membranous web. Monomer. Homodimer; dimerization is required for RNA-binding. Interacts with the mature core protein. Interacts (via N-terminus) with non-structural protein 4A. Interacts with non-structural protein 4B. Interacts (via region D2) with RNA-directed RNA polymerase. Part of the viral assembly initiation complex composed of NS2, E1, E2, NS3, NS4A, NS5A and the mature core protein. Part of the replication complex composed of NS2, NS3, NS4A, NS4B, NS5A and the RNA-directed RNA polymerase embedded in an ER-derived membranous web. Interacts with host GRB2. Interacts with host BIN1. Interacts with host PIK3R1. Interacts with host SRCAP. Interacts with host FKBP8. Interacts (via C-terminus) with host VAPB (via MSP domain). Interacts with host EIF2AK2/PKR; this interaction leads to disruption of EIF2AK2 dimerization by NS5A and probably allows the virus to evade the innate immune response. Interacts (via N-terminus) with host PACSIN2 (via N-terminus); this interaction attenuates protein kinase C alpha-mediated phosphorylation of PACSIN2 by disrupting the interaction between PACSIN2 and PRKCA. Interacts (via N-terminus) with host SRC kinase (via SH2 domain). Interacts with most Src-family kinases. Interacts with host IFI27 and SKP2; promotes the ubiquitin-mediated proteasomal degradation of NS5A. Interacts with host GPS2. Interacts with host TNFRSF21; this interaction allows the modulation by the virus of JNK, p38 MAPK, STAT3, and Akt signaling pathways in a DR6-dependent manner. Interacts (via N-terminus) with host CIDEB (via N-terminus); this interaction seems to regulate the association of HCV particles with APOE. Interacts with host CHKA/Choline Kinase-alpha; CHKA bridges host PI4KA and NS5A and potentiates NS5A-stimulated PI4KA activity, which then facilitates the targeting of the ternary complex to the ER for viral replication. Interacts with host SPSB2 (via C-terminus); this interaction targets NS5A for ubiquitination and degradation. Interacts with host RAB18; this interaction may promote the association of NS5A and other replicase components with lipid droplets. Interacts (via region D2) with host PPIA/CYPA; the interaction stimulates RNA-binding ability of NS5A and is dependent on the peptidyl-prolyl cis-trans isomerase activity of PPIA/CYPA. Interacts with host TRIM14; this interaction induces the degradation of NS5A. In terms of assembly, homooligomer. Interacts with non-structural protein 5A. Interacts with host VAPB. Interacts with host PRK2/PKN2. Interacts with host HNRNPA1 and SEPT6; these interactions facilitate viral replication. Part of the replication complex composed of NS2, NS3, NS4A, NS4B, NS5A and the RNA-directed RNA polymerase. Requires Zn(2+) as cofactor. It depends on Mg(2+) as a cofactor. Specific enzymatic cleavages in vivo yield mature proteins. The structural proteins, core, E1, E2 and p7 are produced by proteolytic processing by host signal peptidases. The core protein precursor is synthesized as a 23 kDa, which is retained in the ER membrane through the hydrophobic signal peptide. Cleavage by the signal peptidase releases the 21 kDa mature core protein. The cleavage of the core protein precursor occurs between aminoacids 176 and 188 but the exact cleavage site is not known. Some degraded forms of the core protein appear as well during the course of infection. The other proteins (p7, NS2, NS3, NS4A, NS4B, NS5A and NS5B) are cleaved by the viral proteases. Autoprocessing between NS2 and NS3 is mediated by the NS2 cysteine protease catalytic domain and regulated by the NS3 N-terminal domain. In terms of processing, phosphorylated by host PKC and PKA. Post-translationally, ubiquitinated; mediated by UBE3A and leading to core protein subsequent proteasomal degradation. Highly N-glycosylated. In terms of processing, palmitoylation is required for NS2/3 autoprocessing and E2 recruitment to membranes. Post-translationally, palmitoylated. This modification may play a role in its polymerization or in protein-protein interactions. Phosphorylated on serines in a basal form termed p56. p58 is a hyperphosphorylated form of p56. p56 and p58 coexist in the cell in roughly equivalent amounts. Hyperphosphorylation is dependent on the presence of NS4A. Host CSNK1A1/CKI-alpha or RPS6KB1 kinases may be responsible for NS5A phosphorylation. In terms of processing, tyrosine phosphorylation is essential for the interaction with host SRC. Post-translationally, the N-terminus is phosphorylated by host PRK2/PKN2.

It localises to the host endoplasmic reticulum membrane. The protein resides in the host mitochondrion membrane. The protein localises to the virion. Its subcellular location is the host cytoplasm. It is found in the host nucleus. It localises to the host lipid droplet. The protein resides in the virion membrane. The protein localises to the host mitochondrion. Its subcellular location is the host cell membrane. It is found in the host perinuclear region. It carries out the reaction Hydrolysis of four peptide bonds in the viral precursor polyprotein, commonly with Asp or Glu in the P6 position, Cys or Thr in P1 and Ser or Ala in P1'.. It catalyses the reaction a ribonucleoside 5'-triphosphate + H2O = a ribonucleoside 5'-diphosphate + phosphate + H(+). The enzyme catalyses ATP + H2O = ADP + phosphate + H(+). The catalysed reaction is RNA(n) + a ribonucleoside 5'-triphosphate = RNA(n+1) + diphosphate. With respect to regulation, inhibited by the antiviral drug hexamethylene amiloride. Inhibition by amantadine appears to be genotype-dependent. Also inhibited by long-alkyl-chain iminosugar derivatives. Activity is up-regulated by PRK2/PKN2-mediated phosphorylation. Functionally, packages viral RNA to form a viral nucleocapsid, and promotes virion budding. Participates in the viral particle production as a result of its interaction with the non-structural protein 5A. Binds RNA and may function as a RNA chaperone to induce the RNA structural rearrangements taking place during virus replication. Modulates viral translation initiation by interacting with viral IRES and 40S ribosomal subunit. Affects various cell signaling pathways, host immunity and lipid metabolism. Prevents the establishment of cellular antiviral state by blocking the interferon-alpha/beta (IFN-alpha/beta) and IFN-gamma signaling pathways and by blocking the formation of phosphorylated STAT1 and promoting ubiquitin-mediated proteasome-dependent degradation of STAT1. Activates STAT3 leading to cellular transformation. Regulates the activity of cellular genes, including c-myc and c-fos. May repress the promoter of p53, and sequester CREB3 and SP110 isoform 3/Sp110b in the cytoplasm. Represses cell cycle negative regulating factor CDKN1A, thereby interrupting an important check point of normal cell cycle regulation. Targets transcription factors involved in the regulation of inflammatory responses and in the immune response: suppresses TNF-induced NF-kappa-B activation, and activates AP-1. Binds to dendritic cells (DCs) via C1QR1, resulting in down-regulation of T-lymphocytes proliferation. Alters lipid metabolism by interacting with hepatocellular proteins involved in lipid accumulation and storage. Induces up-regulation of FAS promoter activity, and thereby contributes to the increased triglyceride accumulation in hepatocytes (steatosis). In terms of biological role, forms a heterodimer with envelope glycoprotein E2, which mediates virus attachment to the host cell, virion internalization through clathrin-dependent endocytosis and fusion with host membrane. Fusion with the host cell is most likely mediated by both E1 and E2, through conformational rearrangements of the heterodimer required for fusion rather than a classical class II fusion mechanism. E1/E2 heterodimer binds host apolipoproteins such as APOB and ApoE thereby forming a lipo-viro-particle (LVP). APOE associated to the LVP allows the initial virus attachment to cell surface receptors such as the heparan sulfate proteoglycans (HSPGs), syndecan-1 (SDC1), syndecan-1 (SDC2), the low-density lipoprotein receptor (LDLR) and scavenger receptor class B type I (SCARB1). The cholesterol transfer activity of SCARB1 allows E2 exposure and binding of E2 to SCARB1 and the tetraspanin CD81. E1/E2 heterodimer binding on CD81 activates the epithelial growth factor receptor (EGFR) signaling pathway. Diffusion of the complex E1-E2-EGFR-SCARB1-CD81 to the cell lateral membrane allows further interaction with Claudin 1 (CLDN1) and occludin (OCLN) to finally trigger HCV entry. Forms a heterodimer with envelope glycoprotein E1, which mediates virus attachment to the host cell, virion internalization through clathrin-dependent endocytosis and fusion with host membrane. Fusion with the host cell is most likely mediated by both E1 and E2, through conformational rearrangements of the heterodimer required for fusion rather than a classical class II fusion mechanism. The interaction between envelope glycoprotein E2 and host apolipoprotein E/APOE allows the proper assembly, maturation and infectivity of the viral particles. This interaction is probably promoted via the up-regulation of cellular autophagy by the virus. E1/E2 heterodimer binds host apolipoproteins such as APOB and APOE thereby forming a lipo-viro-particle (LVP). APOE associated to the LVP allows the initial virus attachment to cell surface receptors such as the heparan sulfate proteoglycans (HSPGs), syndecan-1 (SDC1), syndecan-1 (SDC2), the low-density lipoprotein receptor (LDLR) and scavenger receptor class B type I (SCARB1). The cholesterol transfer activity of SCARB1 allows E2 exposure and binding of E2 to SCARB1 and the tetraspanin CD81. E1/E2 heterodimer binding on CD81 activates the epithelial growth factor receptor (EGFR) signaling pathway. Diffusion of the complex E1-E2-EGFR-SCARB1-CD81 to the cell lateral membrane allows further interaction with Claudin 1 (CLDN1) and occludin (OCLN) to finally trigger HCV entry. Inhibits host EIF2AK2/PKR activation, preventing the establishment of an antiviral state. Viral ligand for CD209/DC-SIGN and CLEC4M/DC-SIGNR, which are respectively found on dendritic cells (DCs), and on liver sinusoidal endothelial cells and macrophage-like cells of lymph node sinuses. These interactions allow the capture of circulating HCV particles by these cells and subsequent facilitated transmission to permissive cells such as hepatocytes and lymphocyte subpopulations. The interaction between E2 and host amino acid transporter complex formed by SLC3A2 and SLC7A5/LAT1 may facilitate viral entry into host cell. Its function is as follows. Ion channel protein that acts as a viroporin and plays an essential role in the assembly, envelopment and secretion of viral particles. Regulates the host cell secretory pathway, which induces the intracellular retention of viral glycoproteins and favors assembly of viral particles. Creates a pore in acidic organelles and releases Ca(2+) and H(+) in the cytoplasm of infected cells, leading to a productive viral infection. High levels of cytoplasmic Ca(2+) may trigger membrane trafficking and transport of viral ER-associated proteins to viroplasms, sites of viral genome replication. This ionic imbalance induces the assembly of the inflammasome complex, which triggers the maturation of pro-IL-1beta into IL-1beta through the action of caspase-1. Targets also host mitochondria and induces mitochondrial depolarization. In addition of its role as a viroporin, acts as a lipid raft adhesion factor. Functionally, cysteine protease required for the proteolytic auto-cleavage between the non-structural proteins NS2 and NS3. The N-terminus of NS3 is required for the function of NS2 protease (active region NS2-3). Promotes the initiation of viral particle assembly by mediating the interaction between structural and non-structural proteins. In terms of biological role, displays three enzymatic activities: serine protease with a chymotrypsin-like fold, NTPase and RNA helicase. NS3 serine protease, in association with NS4A, is responsible for the cleavages of NS3-NS4A, NS4A-NS4B, NS4B-NS5A and NS5A-NS5B. The NS3/NS4A complex prevents phosphorylation of host IRF3, thus preventing the establishment of dsRNA induced antiviral state. The NS3/NS4A complex induces host amino acid transporter component SLC3A2, thus contributing to HCV propagation. NS3 RNA helicase binds to RNA and unwinds both dsDNA and dsRNA in the 3' to 5' direction, and likely resolves RNA complicated stable secondary structures in the template strand. Binds a single ATP and catalyzes the unzipping of a single base pair of dsRNA. Inhibits host antiviral proteins TBK1 and IRF3 thereby preventing the establishment of an antiviral state. Cleaves host MAVS/CARDIF thereby preventing the establishment of an antiviral state. Cleaves host TICAM1/TRIF, thereby disrupting TLR3 signaling and preventing the establishment of an antiviral state. Induces a specific membrane alteration that serves as a scaffold for the virus replication complex. This membrane alteration gives rise to the so-called ER-derived membranous web that contains the replication complex. NS4B self-interaction contributes to its function in membranous web formation. Promotes host TRIF protein degradation in a CASP8-dependent manner thereby inhibiting host TLR3-mediated interferon signaling. Disrupts the interaction between STING and TBK1 contributing to the inhibition of interferon signaling. Its function is as follows. Phosphorylated protein that is indispensable for viral replication and assembly. Both hypo- and hyperphosphorylated states are required for the viral life cycle. The hyperphosphorylated form of NS5A is an inhibitor of viral replication. Involved in RNA-binding and especially in binding to the viral genome. Zinc is essential for RNA-binding. Participates in the viral particle production as a result of its interaction with the mature viral core protein. Its interaction with host VAPB may target the viral replication complex to vesicles. Down-regulates viral IRES translation initiation. Mediates interferon resistance, presumably by interacting with and inhibiting host EIF2AK2/PKR. Prevents BIN1-induced apoptosis. Acts as a transcriptional activator of some host genes important for viral replication when localized in the nucleus. Via the interaction with host PACSIN2, modulates lipid droplet formation in order to promote virion assembly. Modulates TNFRSF21/DR6 signaling pathway for viral propagation. Functionally, RNA-dependent RNA polymerase that performs primer-template recognition and RNA synthesis during viral replication. Initiates RNA transcription/replication at a flavin adenine dinucleotide (FAD), resulting in a 5'- FAD cap on viral RNAs. In this way, recognition of viral 5' RNA by host pattern recognition receptors can be bypassed, thereby evading activation of antiviral pathways. The sequence is that of Genome polyprotein from Hepatitis C virus genotype 5a (isolate EUH1480) (HCV).